The primary structure comprises 543 residues: Protein P78/83 (543 aa).

Disordered stretches follow at residues 147–222 (QALP…QPAA), 235–325 (RNEK…SLSN), and 373–400 (MAKS…ANTP). Residues 182 to 221 (AAPPPPPSPVPNIPAPPPPPPPSMSELPPAPPMPTEPQPA) are compositionally biased toward pro residues. The 21-residue stretch at 226-246 (DRQQLLEAIRNEKNRTRLRPV) folds into the WH2 domain. Residues 271–321 (PKPPSASPPPPPPPPPPPAPPAPPPMVDLSSAPPPPPLVDLPSEMLPPPAP) show a composition bias toward pro residues. Residues 375 to 384 (KSSSEATSND) show a composition bias toward polar residues.

In terms of assembly, forms a complex with proteins C42 and E27. Interacts with host actin-related protein 2/3 complex. Interacts with protein Ac102.

The protein resides in the host cytoplasm. It is found in the host nucleus. Plays a role in the transport of the nucleocapsids from the cytoplasm toward the host nucleus together with the host actin-polymerizing Arp2/3 complex. The protein is Protein P78/83 (P61) of Lepidoptera (butterflies and moths).